Consider the following 495-residue polypeptide: Trimethylamine methyltransferase MttB2 (495 aa).

Residue O334 is a non-standard amino acid, pyrrolysine.

The protein belongs to the trimethylamine methyltransferase family. Can form a complex with MttC.

The catalysed reaction is Co(I)-[trimethylamine-specific corrinoid protein] + trimethylamine + H(+) = methyl-Co(III)-[trimethylamine-specific corrinoid protein] + dimethylamine. It functions in the pathway one-carbon metabolism; methanogenesis from trimethylamine. Its function is as follows. Catalyzes the transfer of a methyl group from trimethylamine to the corrinoid cofactor of MttC. The chain is Trimethylamine methyltransferase MttB2 (mttB2) from Methanosarcina mazei (strain ATCC BAA-159 / DSM 3647 / Goe1 / Go1 / JCM 11833 / OCM 88) (Methanosarcina frisia).